Consider the following 249-residue polypeptide: 23S rRNA (guanosine-2'-O-)-methyltransferase RlmB (249 aa).

Glycine 200, isoleucine 220, and leucine 229 together coordinate S-adenosyl-L-methionine.

Belongs to the class IV-like SAM-binding methyltransferase superfamily. RNA methyltransferase TrmH family. RlmB subfamily.

It is found in the cytoplasm. It carries out the reaction guanosine(2251) in 23S rRNA + S-adenosyl-L-methionine = 2'-O-methylguanosine(2251) in 23S rRNA + S-adenosyl-L-homocysteine + H(+). In terms of biological role, specifically methylates the ribose of guanosine 2251 in 23S rRNA. The protein is 23S rRNA (guanosine-2'-O-)-methyltransferase RlmB of Xylella fastidiosa (strain Temecula1 / ATCC 700964).